The following is a 292-amino-acid chain: Bifunctional protein FolD 2 (292 aa).

Residues 166 to 168 (GHS) and Ile-232 each bind NADP(+).

Belongs to the tetrahydrofolate dehydrogenase/cyclohydrolase family. As to quaternary structure, homodimer.

The enzyme catalyses (6R)-5,10-methylene-5,6,7,8-tetrahydrofolate + NADP(+) = (6R)-5,10-methenyltetrahydrofolate + NADPH. It carries out the reaction (6R)-5,10-methenyltetrahydrofolate + H2O = (6R)-10-formyltetrahydrofolate + H(+). The protein operates within one-carbon metabolism; tetrahydrofolate interconversion. Its function is as follows. Catalyzes the oxidation of 5,10-methylenetetrahydrofolate to 5,10-methenyltetrahydrofolate and then the hydrolysis of 5,10-methenyltetrahydrofolate to 10-formyltetrahydrofolate. The protein is Bifunctional protein FolD 2 of Ruegeria pomeroyi (strain ATCC 700808 / DSM 15171 / DSS-3) (Silicibacter pomeroyi).